The following is a 436-amino-acid chain: G2/mitotic-specific cyclin-B (436 aa).

Residues 1-17 are compositionally biased toward polar residues; that stretch reads MSTINNPLNIKTRSHSS. The disordered stretch occupies residues 1-33; that stretch reads MSTINNPLNIKTRSHSSMGGGMIMDENKVPKSS.

Belongs to the cyclin family. Cyclin AB subfamily. Interacts with the cdk1 protein kinase to form a serine/threonine kinase holoenzyme complex also known as maturation promoting factor (MPF). The cyclin subunit imparts substrate specificity to the complex.

Essential for the control of the cell cycle at the G2/M (mitosis) transition. The protein is G2/mitotic-specific cyclin-B (cycB) of Dictyostelium discoideum (Social amoeba).